We begin with the raw amino-acid sequence, 173 residues long: 3-hydroxydecanoyl-[acyl-carrier-protein] dehydratase (173 aa).

Residue His71 is part of the active site.

It belongs to the thioester dehydratase family. FabA subfamily. Homodimer.

The protein resides in the cytoplasm. It carries out the reaction a (3R)-hydroxyacyl-[ACP] = a (2E)-enoyl-[ACP] + H2O. The catalysed reaction is (3R)-hydroxydecanoyl-[ACP] = (2E)-decenoyl-[ACP] + H2O. It catalyses the reaction (2E)-decenoyl-[ACP] = (3Z)-decenoyl-[ACP]. The protein operates within lipid metabolism; fatty acid biosynthesis. In terms of biological role, necessary for the introduction of cis unsaturation into fatty acids. Catalyzes the dehydration of (3R)-3-hydroxydecanoyl-ACP to E-(2)-decenoyl-ACP and then its isomerization to Z-(3)-decenoyl-ACP. Can catalyze the dehydratase reaction for beta-hydroxyacyl-ACPs with saturated chain lengths up to 16:0, being most active on intermediate chain length. In Bradyrhizobium sp. (strain ORS 278), this protein is 3-hydroxydecanoyl-[acyl-carrier-protein] dehydratase.